The following is a 219-amino-acid chain: uncharacterized protein (219 aa).

Positions 1 to 15 (MYVLFLLSWVLVAGA) are cleaved as a signal peptide. A glycan (N-linked (GlcNAc...) asparagine) is linked at Asn118. The disordered stretch occupies residues 138 to 174 (GEVGEDPGKRARKRRLGLPIGEPGEDVGKRMRQRQQG).

In terms of tissue distribution, component of the acid-insoluble and acid-soluble organic matrix of calcified layers of the shell (at protein level).

Its subcellular location is the secreted. This is an uncharacterized protein from Lottia gigantea (Giant owl limpet).